The following is a 116-amino-acid chain: T cell receptor alpha variable 38-2/delta variable 8 (116 aa).

Positions 1 to 21 (MACPGFLWALVISTCLEFSMA) are cleaved as a signal peptide. In terms of domain architecture, Ig-like spans 22–116 (QTVTQSQPEM…AAMYFCAYRS (95 aa)). Residues C43 and C112 are joined by a disulfide bond. N-linked (GlcNAc...) asparagine glycosylation is present at N78.

Alpha-beta TR is a heterodimer composed of an alpha and beta chain; disulfide-linked. The alpha-beta TR is associated with the transmembrane signaling CD3 coreceptor proteins to form the TR-CD3 (TcR or TCR). The assembly of alpha-beta TR heterodimers with CD3 occurs in the endoplasmic reticulum where a single alpha-beta TR heterodimer associates with one CD3D-CD3E heterodimer, one CD3G-CD3E heterodimer and one CD247 homodimer forming a stable octameric structure. CD3D-CD3E and CD3G-CD3E heterodimers preferentially associate with TR alpha and TR beta chains, respectively. The association of the CD247 homodimer is the last step of TcR assembly in the endoplasmic reticulum and is required for transport to the cell surface.

Its subcellular location is the cell membrane. In terms of biological role, v region of the variable domain of T cell receptor (TR) alpha chain that participates in the antigen recognition. Alpha-beta T cell receptors are antigen specific receptors which are essential to the immune response and are present on the cell surface of T lymphocytes. Recognize peptide-major histocompatibility (MH) (pMH) complexes that are displayed by antigen presenting cells (APC), a prerequisite for efficient T cell adaptive immunity against pathogens. Binding of alpha-beta TR to pMH complex initiates TR-CD3 clustering on the cell surface and intracellular activation of LCK that phosphorylates the ITAM motifs of CD3G, CD3D, CD3E and CD247 enabling the recruitment of ZAP70. In turn ZAP70 phosphorylates LAT, which recruits numerous signaling molecules to form the LAT signalosome. The LAT signalosome propagates signal branching to three major signaling pathways, the calcium, the mitogen-activated protein kinase (MAPK) kinase and the nuclear factor NF-kappa-B (NF-kB) pathways, leading to the mobilization of transcription factors that are critical for gene expression and essential for T cell growth and differentiation. The T cell repertoire is generated in the thymus, by V-(D)-J rearrangement. This repertoire is then shaped by intrathymic selection events to generate a peripheral T cell pool of self-MH restricted, non-autoaggressive T cells. Post-thymic interaction of alpha-beta TR with the pMH complexes shapes TR structural and functional avidity. In Homo sapiens (Human), this protein is T cell receptor alpha variable 38-2/delta variable 8.